Consider the following 473-residue polypeptide: FAD-dependent oxidoreductase dpasF (473 aa).

An N-terminal signal peptide occupies residues 1–21; the sequence is MNRLLASALLVGSAVVAPVSA. N-linked (GlcNAc...) asparagine glycosylation is found at Asn-26, Asn-54, Asn-92, Asn-133, Asn-185, Asn-276, and Asn-401.

The protein belongs to the beta-cyclopiazonate dehydrogenase family. The cofactor is FAD.

It participates in secondary metabolite biosynthesis; terpenoid biosynthesis. In terms of biological role, FAD-dependent oxidoreductase; part of the gene cluster that mediates the biosynthesis of the diterpenoid pyrones subglutinols A and B. The first step of the pathway is the synthesis of the alpha-pyrone moiety by the polyketide synthase dpasA via condensation of one acetyl-CoA starter unit with 3 malonyl-CoA units and 2 methylations. The alpha-pyrone is then combined with geranylgeranyl pyrophosphate (GGPP) formed by the GGPP synthase dpasD through the action of the prenyltransferase dpasC to yield a linear alpha-pyrone diterpenoid. Subsequent steps in the diterpenoid pyrone biosynthetic pathway involve the decalin core formation, which is initiated by the epoxidation of the C10-C11 olefin by the FAD-dependent oxidoreductase dpasE, and is followed by a cyclization cascade catalyzed by the terpene cyclase dpasB. The FAD-linked oxidoreductase dpasF is then involved in tetrahydrofuran (THF) ring formation at the C5 unit to complete the formation of subglutinols A and B. DpasF possesses also an additional catalytic ability of multi-step oxidations to generate a new DDP analog with an enone system at the C5 named FDDP A. The protein is FAD-dependent oxidoreductase dpasF of Apiospora sacchari (Arthrinium sacchari).